The following is a 209-amino-acid chain: MRAAAISMPRLNKMPGMFFSASPKDSKEHSHSLLDDKKQKKRPKTFGMDVKTYLRSMIPHLESGMKSAKSKDILSAEEVMQWSQSLEKLLANQTGQNVFGRFLKSEFSEENIEFWLACEDYKKTETDLLHNKAENIYKAFVHSDAVKQINIDFHTRESTAKKIKTPTPTSFDEAQKVIYSLMEKDSYPRFLKSNIYLNLLNDLQANTLK.

The interval 19–42 is disordered; that stretch reads FSASPKDSKEHSHSLLDDKKQKKR. The segment covering 24–38 has biased composition (basic and acidic residues); sequence KDSKEHSHSLLDDKK. Positions 85–200 constitute an RGS domain; it reads SLEKLLANQT…LKSNIYLNLL (116 aa).

Interacts with GNAI1 and GNAQ. As to expression, detected in spleen, lymph node and intestine.

It localises to the cell membrane. Its subcellular location is the cytoplasm. The protein resides in the cytosol. Its function is as follows. Regulates G protein-coupled receptor signaling cascades, including signaling downstream of the N-formylpeptide chemoattractant receptors and leukotriene receptors. Inhibits B cell chemotaxis toward CXCL12. Inhibits signal transduction by increasing the GTPase activity of G protein alpha subunits thereby driving them into their inactive GDP-bound form. The polypeptide is Regulator of G-protein signaling 1 (Rgs1) (Mus musculus (Mouse)).